Here is a 390-residue protein sequence, read N- to C-terminus: NADH-quinone oxidoreductase subunit D (390 aa).

Belongs to the complex I 49 kDa subunit family. In terms of assembly, NDH-1 is composed of 14 different subunits. Subunits NuoB, C, D, E, F, and G constitute the peripheral sector of the complex.

Its subcellular location is the cell inner membrane. The catalysed reaction is a quinone + NADH + 5 H(+)(in) = a quinol + NAD(+) + 4 H(+)(out). NDH-1 shuttles electrons from NADH, via FMN and iron-sulfur (Fe-S) centers, to quinones in the respiratory chain. The immediate electron acceptor for the enzyme in this species is believed to be ubiquinone. Couples the redox reaction to proton translocation (for every two electrons transferred, four hydrogen ions are translocated across the cytoplasmic membrane), and thus conserves the redox energy in a proton gradient. This is NADH-quinone oxidoreductase subunit D from Trichlorobacter lovleyi (strain ATCC BAA-1151 / DSM 17278 / SZ) (Geobacter lovleyi).